Reading from the N-terminus, the 224-residue chain is Urease accessory protein UreG (224 aa).

Basic residues predominate over residues M1 to R20. The disordered stretch occupies residues M1–P25. G32–T39 contacts GTP.

It belongs to the SIMIBI class G3E GTPase family. UreG subfamily. Homodimer. UreD, UreF and UreG form a complex that acts as a GTP-hydrolysis-dependent molecular chaperone, activating the urease apoprotein by helping to assemble the nickel containing metallocenter of UreC. The UreE protein probably delivers the nickel.

It is found in the cytoplasm. Facilitates the functional incorporation of the urease nickel metallocenter. This process requires GTP hydrolysis, probably effectuated by UreG. The polypeptide is Urease accessory protein UreG (Mycobacterium bovis (strain ATCC BAA-935 / AF2122/97)).